A 215-amino-acid chain; its full sequence is UPF0502 protein Gbem_0102 (215 aa).

Belongs to the UPF0502 family.

This Citrifermentans bemidjiense (strain ATCC BAA-1014 / DSM 16622 / JCM 12645 / Bem) (Geobacter bemidjiensis) protein is UPF0502 protein Gbem_0102.